The sequence spans 2479 residues: Centrosomal protein of 290 kDa (2479 aa).

Positions 1 to 695 (MPPNINWKEI…IESKNAEGIF (695 aa)) are self-association (with itself or C-terminus). Coiled-coil stretches lie at residues 59 to 565 (MKMK…ERGK), 598 to 664 (SLKN…MQKD), 697 to 931 (ASLH…VCEK), 958 to 1027 (SLSE…IEQA), 1071 to 1498 (QRAE…ILSR), 1533 to 1584 (HTLK…LHIL), and 1635 to 2452 (DSLS…SEQL). Residues 149–163 (ALRNEEAENENSKLR) show a composition bias toward basic and acidic residues. Residues 149–168 (ALRNEEAENENSKLRRENKR) are disordered. Residues 696-896 (DASLHLKAQV…TVLQVNEKSL (201 aa)) form an interaction with IQCB1 region. The tract at residues 1966 to 2479 (TTGMTVDQVL…EESPVNFPIY (514 aa)) is self-association (with itself or N-terminus). The segment at 2458-2479 (SPVAASEEFEDEEESPVNFPIY) is disordered.

Part of the tectonic-like complex (also named B9 complex). Interacts with ATF4 via its N-terminal region. Associates with the BBSome complex, interacting (via N-terminus) with BBS4. Interacts with IQCB1/NPHP5; IQCB1 and CEP290/NPHP6 are proposed to form a functional NPHP5-6 module localized to the centrosome. Interacts with NPHP4; the interaction likely requires additional interactors. Interacts with ZNF423, FAM161A, CEP162, CEP162, CEP131, TALPID3, CCDC13, CC2D2A, RPGRIP1. Can self-associate (homo- or heteromeric). Interacts with CCP110; required for suppressing cilia formation. Interacts with RPGR. Associates (via C-terminus) with microtubules; association to microtubule is reduced in response to cellular stress, such as ultraviolet light (UV) radiation or heat shock, in a process that requires p38 MAP kinase signaling. Interacts with FAM161A. Interacts with PCM1. Interacts with CCDC66. Interacts with ARMC9 and CSPP1. Ubiquitinated. May undergo monoubiquitination; monoubiquitination is inhibited in response to cellular stress, such as ultraviolet light (UV) radiation or heat shock, but does not cause its displacement from centriolar satellites. In terms of tissue distribution, ubiquitous. Expressed strongly in placenta and weakly in brain.

It localises to the cytoplasm. Its subcellular location is the cytoskeleton. It is found in the microtubule organizing center. The protein resides in the centrosome. The protein localises to the centriolar satellite. It localises to the nucleus. Its subcellular location is the cell projection. It is found in the cilium. The protein resides in the cilium basal body. The protein localises to the centriole. It localises to the cytoplasmic vesicle. Its function is as follows. Involved in early and late steps in cilia formation. Its association with CCP110 is required for inhibition of primary cilia formation by CCP110. May play a role in early ciliogenesis in the disappearance of centriolar satellites and in the transition of primary ciliar vesicles (PCVs) to capped ciliary vesicles (CCVs). Required for the centrosomal recruitment of RAB8A and for the targeting of centriole satellite proteins to centrosomes such as of PCM1. Required for the correct localization of ciliary and phototransduction proteins in retinal photoreceptor cells; may play a role in ciliary transport processes. Required for efficient recruitment of RAB8A to primary cilium. In the ciliary transition zone is part of the tectonic-like complex which is required for tissue-specific ciliogenesis and may regulate ciliary membrane composition. Involved in regulation of the BBSome complex integrity, specifically for presence of BBS2, BBS5 and BBS8/TTC8 in the complex, and in ciliary targeting of selected BBSome cargos. May play a role in controlling entry of the BBSome complex to cilia possibly implicating IQCB1/NPHP5. Activates ATF4-mediated transcription. The chain is Centrosomal protein of 290 kDa (CEP290) from Homo sapiens (Human).